Here is a 450-residue protein sequence, read N- to C-terminus: UPF0236 protein in vanSb 3'region (450 aa).

The protein belongs to the UPF0236 family.

This Streptococcus gallolyticus (Streptococcus bovis biotype I) protein is UPF0236 protein in vanSb 3'region.